The primary structure comprises 73 residues: UPF0346 protein lp_1865 (73 aa).

Belongs to the UPF0346 family.

This chain is UPF0346 protein lp_1865, found in Lactiplantibacillus plantarum (strain ATCC BAA-793 / NCIMB 8826 / WCFS1) (Lactobacillus plantarum).